The primary structure comprises 165 residues: Growth arrest and DNA damage-inducible protein GADD45 alpha (165 aa).

At Thr-2 the chain carries Phosphothreonine.

This sequence belongs to the GADD45 family. Interacts with AURKA, GADD45GIP1 and PCNA. Interacts with MAPK14.

It localises to the nucleus. In terms of biological role, might affect PCNA interaction with some CDK (cell division protein kinase) complexes; stimulates DNA excision repair in vitro and inhibits entry of cells into S phase. In T-cells, functions as a regulator of p38 MAPKs by inhibiting p88 phosphorylation and activity. In Mus musculus (Mouse), this protein is Growth arrest and DNA damage-inducible protein GADD45 alpha (Gadd45a).